A 384-amino-acid chain; its full sequence is Iron(3+)-hydroxamate import system permease protein FhuB (384 aa).

The next 9 membrane-spanning stretches (helical) occupy residues 58 to 78, 115 to 135, 154 to 174, 176 to 196, 202 to 222, 243 to 263, 296 to 316, 330 to 350, and 357 to 377; these read GAVI…FLSI, TAAA…MQGM, FAVS…LVLW, FAGA…SRGG, LALA…AIAI, WSGV…AFFI, VILT…GLII, WIIP…DIAA, and FETP…FYLA.

Belongs to the binding-protein-dependent transport system permease family. FecCD subfamily. As to quaternary structure, the complex is composed of an ATP-binding protein (FhuC), two transmembrane proteins (FhuB and FhuG) and a solute-binding protein (FhuD or YxeB).

The protein resides in the cell membrane. It is found in the membrane raft. In terms of biological role, part of the ABC transporter complex FhuBGCD involved in iron(3+)-hydroxamate import. Responsible for the translocation of the substrate across the membrane. The chain is Iron(3+)-hydroxamate import system permease protein FhuB (fhuB) from Bacillus subtilis (strain 168).